The sequence spans 198 residues: Cyclotides mra4/mra5 (198 aa).

Residues 1–22 form the signal peptide; the sequence is MESNKMVVGVLLIAAFALPALA. Residues 23–79 constitute a propeptide that is removed on maturation; sequence LFERDVITHETIEAVLKKSTPNSNTMLQEDAINALTGKTLISQTILEETLLKNGVVG. Intrachain disulfides connect cysteine 84-cysteine 100, cysteine 88-cysteine 102, and cysteine 93-cysteine 107. Residues 111 to 163 constitute a propeptide that is removed on maturation; the sequence is SLALPTLEKDVITPEALEAVLKSNGGAIVNTKTIISNAIFEETLLNNANHVLG. 3 cysteine pairs are disulfide-bonded: cysteine 167-cysteine 183, cysteine 171-cysteine 185, and cysteine 176-cysteine 190. The propeptide occupies 194 to 198; it reads SLALN.

The protein belongs to the cyclotide family. Bracelet subfamily. These are cyclic peptides. Post-translationally, the mature peptides contain 3 disulfide bonds each.

Its function is as follows. Probably participates in a plant defense mechanism. This is Cyclotides mra4/mra5 from Melicytus ramiflorus (Whitey wood).